Here is a 307-residue protein sequence, read N- to C-terminus: Non-homologous end joining protein Ku (307 aa).

The Ku domain maps to 11–179 (LSFGLVSIPV…EVRSMKDLNI (169 aa)). Composition is skewed to low complexity over residues 257–267 (RGGAKAKPAAA) and 290–307 (ARAPKSPAEAPAKVRARK). The segment at 257–307 (RGGAKAKPAAAPRRKAPEPVAGMAEATRARKPAARAPKSPAEAPAKVRARK) is disordered.

This sequence belongs to the prokaryotic Ku family. As to quaternary structure, homodimer. Interacts with LigD.

Functionally, with LigD forms a non-homologous end joining (NHEJ) DNA repair enzyme, which repairs dsDNA breaks with reduced fidelity. Binds linear dsDNA with 5'- and 3'- overhangs but not closed circular dsDNA nor ssDNA. Recruits and stimulates the ligase activity of LigD. The polypeptide is Non-homologous end joining protein Ku (Paraburkholderia phymatum (strain DSM 17167 / CIP 108236 / LMG 21445 / STM815) (Burkholderia phymatum)).